The following is a 96-amino-acid chain: MAFNMITFLQMAVFVVILFNINLHSASAGSKESSAHQSSDDSIKAEFCDAKCTMKTDGKWTQCHGGCFCVHVGNETEGRCMRLDGDYDYPSTQPEE.

A signal peptide spans 1-28 (MAFNMITFLQMAVFVVILFNINLHSASA). 3 disulfides stabilise this stretch: C48–C67, C52–C69, and C63–C80. A glycan (N-linked (GlcNAc...) asparagine) is linked at N74.

The protein resides in the secreted. Functionally, salivary chemokine-binding protein which binds to host chemokines CXCL1 and CXCL8. In Ixodes ricinus (Common tick), this protein is Evasin P1074.